The sequence spans 549 residues: Neutral amino acid transporter 9 (549 aa).

Residues 1 to 27 (MDEDSKPLLGSVPTGDYYTDSLDPKQR) are disordered. Topologically, residues 1–107 (MDEDSKPLLG…GGDSPIKNPS (107 aa)) are cytoplasmic. The helical transmembrane segment at 108-128 (IVTIFAIWNTMMGTSILSIPW) threads the bilayer. Positions 117–122 (TMMGTS) are important for arginine binding and amino acid transport. Ser-122 serves as a coordination point for arginine. Residues 129-134 (GIKQAG) lie on the Lumenal side of the membrane. Residues 135-155 (FTLGIIIIVLMGLLTLYCCYR) form a helical membrane-spanning segment. The Cytoplasmic portion of the chain corresponds to 156-186 (VLKSTKSIPYVDTSDWEFPDVCKYYFGGFGK). A helical transmembrane segment spans residues 187–213 (WSSLVFSLVSLIGAMVVYWVLMSNFLF). The Lumenal portion of the chain corresponds to 214-271 (NTGKFIFNYVHNVNTSDAFGTNGTERVICPYPDVDPHGNSSTSLYSGSDNSTGLEFDH). Residues Asn-227, Asn-235, Asn-252, and Asn-263 are each glycosylated (N-linked (GlcNAc...) asparagine). Residues Cys-242 and Cys-412 are joined by a disulfide bond. Residues 272 to 288 (WWSKTNTIPFYLILLLL) traverse the membrane as a helical segment. At 289 to 297 (PLLNFRSAS) the chain is on the cytoplasmic side. A helical transmembrane segment spans residues 298–322 (FFARFTFLGTISVIYLIFLVTYKAI). Residues 323-344 (QLGFHLEFHWFDSSMFFVPEFR) lie on the Lumenal side of the membrane. Residues 345 to 365 (TLFPQLSGVLTLAFFIHNCII) traverse the membrane as a helical segment. At 366–382 (TLMKNNKHQENNVRDLS) the chain is on the cytoplasmic side. Residues 383-403 (LAYLLVGLTYLYVGVLIFAAF) traverse the membrane as a helical segment. Residues 404–425 (PSPPLSKECIEPNFLDNFPSSD) lie on the Lumenal side of the membrane. A helical transmembrane segment spans residues 426–446 (ILVFVARTFLLFQMTTVYPLL). Positions 432–442 (RTFLLFQMTTV) match the CARC motif motif. The short motif at 445–451 (LLGYLVR) is the CRAC motif element. At 447 to 467 (GYLVRVQLMGQIFGNHYPGFL) the chain is on the cytoplasmic side. The helical transmembrane segment at 468–488 (HVFVLNVFVVGAGVLMARFYP) threads the bilayer. The Lumenal portion of the chain corresponds to 489 to 495 (NIGSIIR). Residues 496-516 (YSGALCGLALVFVLPSLIHMV) form a helical membrane-spanning segment. Residues 517–528 (SLKRRGELRWTS) are Cytoplasmic-facing. The helical transmembrane segment at 529 to 549 (TLFHGFLILLGVANLLGQFFM) threads the bilayer.

Belongs to the amino acid/polyamine transporter 2 family. SLC38A9 subfamily. In terms of assembly, associated component of the Ragulator complex. Associated component of the Rag GTPases heterodimers (RRAGA and RRAGC). In terms of processing, glycosylated.

It localises to the lysosome membrane. Its subcellular location is the late endosome membrane. It carries out the reaction L-leucine(in) = L-leucine(out). It catalyses the reaction L-tyrosine(in) = L-tyrosine(out). The enzyme catalyses L-glutamine(out) = L-glutamine(in). The catalysed reaction is L-asparagine(out) = L-asparagine(in). With respect to regulation, amino acid transport activity is increased by sodium. Transport of L-glutamine, leucine and tyrosine is increased by arginine binding. Lysosomal amino acid transporter involved in the activation of mTORC1 in response to amino acid levels. Probably acts as an amino acid sensor of the Rag GTPases and Ragulator complexes, 2 complexes involved in amino acid sensing and activation of mTORC1, a signaling complex promoting cell growth in response to growth factors, energy levels, and amino acids. Following activation by amino acids, the Ragulator and Rag GTPases function as a scaffold recruiting mTORC1 to lysosomes where it is in turn activated. SLC38A9 mediates transport of amino acids with low capacity and specificity with a slight preference for polar amino acids. Acts as an arginine sensor. Following activation by arginine binding, mediates transport of L-glutamine, leucine and tyrosine with high efficiency, and is required for the efficient utilization of these amino acids after lysosomal protein degradation. However, the transport mechanism is not well defined and the role of sodium is not clear. Guanine exchange factor (GEF) that, upon arginine binding, stimulates GDP release from RRAGA and therefore activates the Rag GTPase heterodimer and the mTORC1 pathway in response to nutrient sufficiency. The chain is Neutral amino acid transporter 9 from Danio rerio (Zebrafish).